A 383-amino-acid polypeptide reads, in one-letter code: Chaperone protein DnaJ (383 aa).

Positions 5 to 70 constitute a J domain; sequence DYYELLGVEK…QKRAAYDRFG (66 aa). The CR-type zinc-finger motif lies at 137–215; that stretch reads GKTATVKVPS…CGGSGRTRKE (79 aa). Residues Cys150, Cys153, Cys167, Cys170, Cys189, Cys192, Cys203, and Cys206 each coordinate Zn(2+). CXXCXGXG motif repeat units lie at residues 150–157, 167–174, 189–196, and 203–210; these read CEDCKGTG, CSACHGHG, CPTCQGMG, and CRSCGGSG.

This sequence belongs to the DnaJ family. Homodimer. It depends on Zn(2+) as a cofactor.

It localises to the cytoplasm. Functionally, participates actively in the response to hyperosmotic and heat shock by preventing the aggregation of stress-denatured proteins and by disaggregating proteins, also in an autonomous, DnaK-independent fashion. Unfolded proteins bind initially to DnaJ; upon interaction with the DnaJ-bound protein, DnaK hydrolyzes its bound ATP, resulting in the formation of a stable complex. GrpE releases ADP from DnaK; ATP binding to DnaK triggers the release of the substrate protein, thus completing the reaction cycle. Several rounds of ATP-dependent interactions between DnaJ, DnaK and GrpE are required for fully efficient folding. Also involved, together with DnaK and GrpE, in the DNA replication of plasmids through activation of initiation proteins. This is Chaperone protein DnaJ from Paramagnetospirillum magneticum (strain ATCC 700264 / AMB-1) (Magnetospirillum magneticum).